A 187-amino-acid polypeptide reads, in one-letter code: Peptidyl-tRNA hydrolase (187 aa).

Residue Tyr14 coordinates tRNA. His19 (proton acceptor) is an active-site residue. TRNA-binding residues include Tyr64, Asn66, and Asn112.

This sequence belongs to the PTH family. Monomer.

The protein localises to the cytoplasm. It catalyses the reaction an N-acyl-L-alpha-aminoacyl-tRNA + H2O = an N-acyl-L-amino acid + a tRNA + H(+). Its function is as follows. Hydrolyzes ribosome-free peptidyl-tRNAs (with 1 or more amino acids incorporated), which drop off the ribosome during protein synthesis, or as a result of ribosome stalling. In terms of biological role, catalyzes the release of premature peptidyl moieties from peptidyl-tRNA molecules trapped in stalled 50S ribosomal subunits, and thus maintains levels of free tRNAs and 50S ribosomes. The chain is Peptidyl-tRNA hydrolase from Bdellovibrio bacteriovorus (strain ATCC 15356 / DSM 50701 / NCIMB 9529 / HD100).